A 115-amino-acid chain; its full sequence is Holo-[acyl-carrier-protein] synthase (115 aa).

Mg(2+) contacts are provided by Asp6 and Glu51.

The protein belongs to the P-Pant transferase superfamily. AcpS family. Mg(2+) is required as a cofactor.

It localises to the cytoplasm. The catalysed reaction is apo-[ACP] + CoA = holo-[ACP] + adenosine 3',5'-bisphosphate + H(+). Transfers the 4'-phosphopantetheine moiety from coenzyme A to a Ser of acyl-carrier-protein. In Campylobacter jejuni subsp. jejuni serotype O:6 (strain 81116 / NCTC 11828), this protein is Holo-[acyl-carrier-protein] synthase.